Consider the following 248-residue polypeptide: Ubiquinone/menaquinone biosynthesis C-methyltransferase UbiE (248 aa).

S-adenosyl-L-methionine-binding residues include S68 and D92.

It belongs to the class I-like SAM-binding methyltransferase superfamily. MenG/UbiE family.

It carries out the reaction a 2-demethylmenaquinol + S-adenosyl-L-methionine = a menaquinol + S-adenosyl-L-homocysteine + H(+). It catalyses the reaction a 2-methoxy-6-(all-trans-polyprenyl)benzene-1,4-diol + S-adenosyl-L-methionine = a 5-methoxy-2-methyl-3-(all-trans-polyprenyl)benzene-1,4-diol + S-adenosyl-L-homocysteine + H(+). Its pathway is quinol/quinone metabolism; menaquinone biosynthesis; menaquinol from 1,4-dihydroxy-2-naphthoate: step 2/2. The protein operates within cofactor biosynthesis; ubiquinone biosynthesis. Its function is as follows. Methyltransferase required for the conversion of demethylmenaquinol (DMKH2) to menaquinol (MKH2) and the conversion of 2-polyprenyl-6-methoxy-1,4-benzoquinol (DDMQH2) to 2-polyprenyl-3-methyl-6-methoxy-1,4-benzoquinol (DMQH2). This chain is Ubiquinone/menaquinone biosynthesis C-methyltransferase UbiE, found in Rickettsia felis (strain ATCC VR-1525 / URRWXCal2) (Rickettsia azadi).